A 364-amino-acid chain; its full sequence is UDP-N-acetylglucosamine--N-acetylmuramyl-(pentapeptide) pyrophosphoryl-undecaprenol N-acetylglucosamine transferase (364 aa).

UDP-N-acetyl-alpha-D-glucosamine contacts are provided by residues 10-12, asparagine 124, arginine 166, serine 196, and glutamine 297; that span reads TGG.

It belongs to the glycosyltransferase 28 family. MurG subfamily.

It is found in the cell membrane. The enzyme catalyses di-trans,octa-cis-undecaprenyl diphospho-N-acetyl-alpha-D-muramoyl-L-alanyl-D-glutamyl-meso-2,6-diaminopimeloyl-D-alanyl-D-alanine + UDP-N-acetyl-alpha-D-glucosamine = di-trans,octa-cis-undecaprenyl diphospho-[N-acetyl-alpha-D-glucosaminyl-(1-&gt;4)]-N-acetyl-alpha-D-muramoyl-L-alanyl-D-glutamyl-meso-2,6-diaminopimeloyl-D-alanyl-D-alanine + UDP + H(+). It participates in cell wall biogenesis; peptidoglycan biosynthesis. Its function is as follows. Cell wall formation. Catalyzes the transfer of a GlcNAc subunit on undecaprenyl-pyrophosphoryl-MurNAc-pentapeptide (lipid intermediate I) to form undecaprenyl-pyrophosphoryl-MurNAc-(pentapeptide)GlcNAc (lipid intermediate II). This Thermoanaerobacter pseudethanolicus (strain ATCC 33223 / 39E) (Clostridium thermohydrosulfuricum) protein is UDP-N-acetylglucosamine--N-acetylmuramyl-(pentapeptide) pyrophosphoryl-undecaprenol N-acetylglucosamine transferase.